Reading from the N-terminus, the 317-residue chain is ADP-L-glycero-D-manno-heptose-6-epimerase (317 aa).

NADP(+) contacts are provided by residues 10-11 (FI), 31-32 (DD), lysine 38, lysine 53, 75-79 (QGACS), and asparagine 92. The active-site Proton acceptor is the tyrosine 139. An NADP(+)-binding site is contributed by lysine 143. Asparagine 166 is a substrate binding site. Residues valine 167 and lysine 175 each coordinate NADP(+). Catalysis depends on lysine 175, which acts as the Proton acceptor. Residues glycine 177, histidine 184, 198–201 (FQGH), arginine 211, and tyrosine 275 each bind substrate.

The protein belongs to the NAD(P)-dependent epimerase/dehydratase family. HldD subfamily. As to quaternary structure, homopentamer. NADP(+) serves as cofactor.

It catalyses the reaction ADP-D-glycero-beta-D-manno-heptose = ADP-L-glycero-beta-D-manno-heptose. The protein operates within nucleotide-sugar biosynthesis; ADP-L-glycero-beta-D-manno-heptose biosynthesis; ADP-L-glycero-beta-D-manno-heptose from D-glycero-beta-D-manno-heptose 7-phosphate: step 4/4. Its function is as follows. Catalyzes the interconversion between ADP-D-glycero-beta-D-manno-heptose and ADP-L-glycero-beta-D-manno-heptose via an epimerization at carbon 6 of the heptose. In Shewanella loihica (strain ATCC BAA-1088 / PV-4), this protein is ADP-L-glycero-D-manno-heptose-6-epimerase.